A 193-amino-acid polypeptide reads, in one-letter code: Leucyl/phenylalanyl-tRNA--protein transferase (193 aa).

The protein belongs to the L/F-transferase family.

It localises to the cytoplasm. The catalysed reaction is N-terminal L-lysyl-[protein] + L-leucyl-tRNA(Leu) = N-terminal L-leucyl-L-lysyl-[protein] + tRNA(Leu) + H(+). It carries out the reaction N-terminal L-arginyl-[protein] + L-leucyl-tRNA(Leu) = N-terminal L-leucyl-L-arginyl-[protein] + tRNA(Leu) + H(+). The enzyme catalyses L-phenylalanyl-tRNA(Phe) + an N-terminal L-alpha-aminoacyl-[protein] = an N-terminal L-phenylalanyl-L-alpha-aminoacyl-[protein] + tRNA(Phe). In terms of biological role, functions in the N-end rule pathway of protein degradation where it conjugates Leu, Phe and, less efficiently, Met from aminoacyl-tRNAs to the N-termini of proteins containing an N-terminal arginine or lysine. The chain is Leucyl/phenylalanyl-tRNA--protein transferase from Akkermansia muciniphila (strain ATCC BAA-835 / DSM 22959 / JCM 33894 / BCRC 81048 / CCUG 64013 / CIP 107961 / Muc).